Consider the following 29-residue polypeptide: Cyclotide mela-3 (29 aa).

Positions 1-29 form a cross-link, cyclopeptide (Gly-Asp); the sequence is GKPICGETCFKGKCYTPGCTCSYPICKKD. Cystine bridges form between Cys-5-Cys-19, Cys-9-Cys-21, and Cys-14-Cys-26.

In terms of processing, this is a cyclic peptide. Post-translationally, contains 3 disulfide bonds.

Functionally, probably participates in a plant defense mechanism (Potential). Binds to and induces leakage in phospholipd membranes, particularly ones containing 1-palmitoyl-2-oleophosphatidylethanolamine (POPE). In vitro, displays cytotoxicity against cultured cells. Not active against Gram-negative bacterium E.coli ATCC 25922 or Gram-positive bacterium S.aureus ATCC 25923 up to a concentration of 64 uM. The protein is Cyclotide mela-3 of Melicytus latifolius (Norfolk Island mahoe).